We begin with the raw amino-acid sequence, 51 residues long: Insulin (51 aa).

3 disulfides stabilise this stretch: Cys-8–Cys-37, Cys-20–Cys-50, and Cys-36–Cys-41.

This sequence belongs to the insulin family. In terms of assembly, heterodimer of a B chain and an A chain linked by two disulfide bonds.

It is found in the secreted. Functionally, insulin decreases blood glucose concentration. It increases cell permeability to monosaccharides, amino acids and fatty acids. It accelerates glycolysis, the pentose phosphate cycle, and glycogen synthesis in liver. The polypeptide is Insulin (ins) (Platichthys flesus (European flounder)).